We begin with the raw amino-acid sequence, 141 residues long: 3-hydroxyacyl-[acyl-carrier-protein] dehydratase FabZ (141 aa).

The active site involves His-48.

It belongs to the thioester dehydratase family. FabZ subfamily.

The protein resides in the cytoplasm. It catalyses the reaction a (3R)-hydroxyacyl-[ACP] = a (2E)-enoyl-[ACP] + H2O. Functionally, involved in unsaturated fatty acids biosynthesis. Catalyzes the dehydration of short chain beta-hydroxyacyl-ACPs and long chain saturated and unsaturated beta-hydroxyacyl-ACPs. This Herpetosiphon aurantiacus (strain ATCC 23779 / DSM 785 / 114-95) protein is 3-hydroxyacyl-[acyl-carrier-protein] dehydratase FabZ.